Here is a 432-residue protein sequence, read N- to C-terminus: MNQQSPIANISRFFNAPLAETDPDLAAAIGRELGRQQDGIELIASENIVSRAVLEAQGSVLTNKYAEGYPGKRYYGGCAAVDIAEELAIARAKELFGCAFANVQPHSGAQANQAVFLALLNAGDTILGMSLAAGGHLTHGAAPNLSGKWFDAVQYGVKREDGTLDYEELERLARERKPKLIIAGGSAYPRFIDFARIRKVADEVGAYFMVDMAHFAGLVAAGIFPSPVPHAHVVTTTTHKTLRGPRGGMILSNDLDLGKKINSAVFPGLQGGPLMHVIAAKAVAFGEALRPEFRAYQKALAENAKVLAETLVEGGLDIVTGGTDCHLMLVDLRPKNVTGKAAEASLERAHMTANKNAIPFDPAKPAVTSGIRLGTPAATTRGFGPDEFRMVGRFIVEVLDGLSASNDGDNAAVEAAVGAKVLELCARFPIYR.

(6S)-5,6,7,8-tetrahydrofolate-binding positions include Leu-131 and 135 to 137; that span reads GHL. N6-(pyridoxal phosphate)lysine is present on Lys-240.

It belongs to the SHMT family. In terms of assembly, homodimer. Pyridoxal 5'-phosphate serves as cofactor.

The protein localises to the cytoplasm. It carries out the reaction (6R)-5,10-methylene-5,6,7,8-tetrahydrofolate + glycine + H2O = (6S)-5,6,7,8-tetrahydrofolate + L-serine. Its pathway is one-carbon metabolism; tetrahydrofolate interconversion. It functions in the pathway amino-acid biosynthesis; glycine biosynthesis; glycine from L-serine: step 1/1. Functionally, catalyzes the reversible interconversion of serine and glycine with tetrahydrofolate (THF) serving as the one-carbon carrier. This reaction serves as the major source of one-carbon groups required for the biosynthesis of purines, thymidylate, methionine, and other important biomolecules. Also exhibits THF-independent aldolase activity toward beta-hydroxyamino acids, producing glycine and aldehydes, via a retro-aldol mechanism. This Acidiphilium cryptum (strain JF-5) protein is Serine hydroxymethyltransferase.